A 68-amino-acid chain; its full sequence is Probable Sec-independent protein translocase protein TatE (68 aa).

Residues Met-1–Gly-21 form a helical membrane-spanning segment. The disordered stretch occupies residues Met-43–Glu-68.

The protein belongs to the TatA/E family. TatE subfamily.

It localises to the cell inner membrane. Part of the twin-arginine translocation (Tat) system that transports large folded proteins containing a characteristic twin-arginine motif in their signal peptide across membranes. TatE shares overlapping functions with TatA. This Klebsiella pneumoniae subsp. pneumoniae (strain ATCC 700721 / MGH 78578) protein is Probable Sec-independent protein translocase protein TatE.